The sequence spans 523 residues: 2-isopropylmalate synthase (523 aa).

One can recognise a Pyruvate carboxyltransferase domain in the interval 5–267; that stretch reads VIIFDTTLRD…HTAINHQEIW (263 aa). The Mn(2+) site is built by D14, H202, H204, and N238. Positions 392–523 are regulatory domain; it reads RLDYFSVQSG…QHNENNKETV (132 aa).

This sequence belongs to the alpha-IPM synthase/homocitrate synthase family. LeuA type 1 subfamily. As to quaternary structure, homodimer. It depends on Mn(2+) as a cofactor.

The protein resides in the cytoplasm. It carries out the reaction 3-methyl-2-oxobutanoate + acetyl-CoA + H2O = (2S)-2-isopropylmalate + CoA + H(+). The protein operates within amino-acid biosynthesis; L-leucine biosynthesis; L-leucine from 3-methyl-2-oxobutanoate: step 1/4. In terms of biological role, catalyzes the condensation of the acetyl group of acetyl-CoA with 3-methyl-2-oxobutanoate (2-ketoisovalerate) to form 3-carboxy-3-hydroxy-4-methylpentanoate (2-isopropylmalate). In Escherichia coli O45:K1 (strain S88 / ExPEC), this protein is 2-isopropylmalate synthase.